A 321-amino-acid polypeptide reads, in one-letter code: tRNA(Ile)-lysidine synthase (321 aa).

20–25 (SGGADS) contributes to the ATP binding site.

It belongs to the tRNA(Ile)-lysidine synthase family.

The protein resides in the cytoplasm. The enzyme catalyses cytidine(34) in tRNA(Ile2) + L-lysine + ATP = lysidine(34) in tRNA(Ile2) + AMP + diphosphate + H(+). In terms of biological role, ligates lysine onto the cytidine present at position 34 of the AUA codon-specific tRNA(Ile) that contains the anticodon CAU, in an ATP-dependent manner. Cytidine is converted to lysidine, thus changing the amino acid specificity of the tRNA from methionine to isoleucine. In Bordetella pertussis (strain Tohama I / ATCC BAA-589 / NCTC 13251), this protein is tRNA(Ile)-lysidine synthase.